Reading from the N-terminus, the 234-residue chain is 3-deoxy-manno-octulosonate cytidylyltransferase (234 aa).

Belongs to the KdsB family.

The protein resides in the cytoplasm. The catalysed reaction is 3-deoxy-alpha-D-manno-oct-2-ulosonate + CTP = CMP-3-deoxy-beta-D-manno-octulosonate + diphosphate. It functions in the pathway nucleotide-sugar biosynthesis; CMP-3-deoxy-D-manno-octulosonate biosynthesis; CMP-3-deoxy-D-manno-octulosonate from 3-deoxy-D-manno-octulosonate and CTP: step 1/1. The protein operates within bacterial outer membrane biogenesis; lipopolysaccharide biosynthesis. In terms of biological role, activates KDO (a required 8-carbon sugar) for incorporation into bacterial lipopolysaccharide in Gram-negative bacteria. The polypeptide is 3-deoxy-manno-octulosonate cytidylyltransferase (Aquifex aeolicus (strain VF5)).